An 831-amino-acid polypeptide reads, in one-letter code: Phosphoinositide phosphatase SAC4 (831 aa).

The 390-residue stretch at 162-551 (LCMVDLTKDF…GDTLAYQYGG (390 aa)) folds into the SAC domain. The interval 439–475 (SDADTSPHNSSDDDSRDYDSLEKNCRPSKNVANGDYD) is disordered. A compositionally biased stretch (basic and acidic residues) spans 448-463 (SSDDDSRDYDSLEKNC). A Phosphatase catalytic core motif is present at residues 487–498 (RTNCIDCLDRTN). A disordered region spans residues 785–805 (PAMRESGSSSRKGKEPVETEL). Positions 796-805 (KGKEPVETEL) are enriched in basic and acidic residues.

As to quaternary structure, component of the PI(3,5)P2 regulatory complex at least composed of ATG18, SAC/FIG4, FAB1 and VAC14. It depends on Mg(2+) as a cofactor. As to expression, ubiquitous with a higher level of expression in young seedlings than in other tissues.

The protein resides in the vacuole membrane. It catalyses the reaction a 1,2-diacyl-sn-glycero-3-phospho-(1D-myo-inositol-3,5-bisphosphate) + H2O = a 1,2-diacyl-sn-glycero-3-phospho-(1D-myo-inositol-3-phosphate) + phosphate. Functionally, the PI(3,5)P2 regulatory complex regulates both the synthesis and turnover of phosphatidylinositol 3,5-bisphosphate (PtdIns(3,5)P2). The sequence is that of Phosphoinositide phosphatase SAC4 (SAC4) from Arabidopsis thaliana (Mouse-ear cress).